We begin with the raw amino-acid sequence, 178 residues long: Cytochrome b6-f complex iron-sulfur subunit (178 aa).

The chain crosses the membrane as a helical span at residues 20–42 (LLTFGTATGVALGALYPVANYFM). The region spanning 65–161 (KTGWLATHQA…VDIEDDAVLV (97 aa)) is the Rieske domain. Residues Cys-107, His-109, Cys-125, and His-128 each contribute to the [2Fe-2S] cluster site. A disulfide bridge connects residues Cys-112 and Cys-127.

Belongs to the Rieske iron-sulfur protein family. The 4 large subunits of the cytochrome b6-f complex are cytochrome b6, subunit IV (17 kDa polypeptide, PetD), cytochrome f and the Rieske protein, while the 4 small subunits are PetG, PetL, PetM and PetN. The complex functions as a dimer. [2Fe-2S] cluster is required as a cofactor.

It localises to the cellular thylakoid membrane. The catalysed reaction is 2 oxidized [plastocyanin] + a plastoquinol + 2 H(+)(in) = 2 reduced [plastocyanin] + a plastoquinone + 4 H(+)(out). Its function is as follows. Component of the cytochrome b6-f complex, which mediates electron transfer between photosystem II (PSII) and photosystem I (PSI), cyclic electron flow around PSI, and state transitions. The sequence is that of Cytochrome b6-f complex iron-sulfur subunit from Prochlorococcus marinus (strain MIT 9215).